The sequence spans 176 residues: 3-hydroxydecanoyl-[acyl-carrier-protein] dehydratase (176 aa).

His-71 is a catalytic residue.

The protein belongs to the thioester dehydratase family. FabA subfamily. As to quaternary structure, homodimer.

Its subcellular location is the cytoplasm. The catalysed reaction is a (3R)-hydroxyacyl-[ACP] = a (2E)-enoyl-[ACP] + H2O. It carries out the reaction (3R)-hydroxydecanoyl-[ACP] = (2E)-decenoyl-[ACP] + H2O. The enzyme catalyses (2E)-decenoyl-[ACP] = (3Z)-decenoyl-[ACP]. The protein operates within lipid metabolism; fatty acid biosynthesis. Functionally, necessary for the introduction of cis unsaturation into fatty acids. Catalyzes the dehydration of (3R)-3-hydroxydecanoyl-ACP to E-(2)-decenoyl-ACP and then its isomerization to Z-(3)-decenoyl-ACP. Can catalyze the dehydratase reaction for beta-hydroxyacyl-ACPs with saturated chain lengths up to 16:0, being most active on intermediate chain length. This is 3-hydroxydecanoyl-[acyl-carrier-protein] dehydratase from Rhodopseudomonas palustris (strain BisB18).